Consider the following 114-residue polypeptide: Small ribosomal subunit protein uS17 (114 aa).

It belongs to the universal ribosomal protein uS17 family. Part of the 30S ribosomal subunit.

Its function is as follows. One of the primary rRNA binding proteins, it binds specifically to the 5'-end of 16S ribosomal RNA. This Saccharolobus solfataricus (strain ATCC 35092 / DSM 1617 / JCM 11322 / P2) (Sulfolobus solfataricus) protein is Small ribosomal subunit protein uS17.